The chain runs to 466 residues: Mitochondrial-processing peptidase subunit beta (466 aa).

His73 serves as a coordination point for Zn(2+). Catalysis depends on Glu76, which acts as the Proton acceptor. Zn(2+) is bound by residues His77 and Glu153.

This sequence belongs to the peptidase M16 family. As to quaternary structure, heterodimer of mppA (alpha) and mppB (beta) subunits, forming the mitochondrial processing protease (MPP) in which mppA is involved in substrate recognition and binding and mppB is the catalytic subunit. Zn(2+) is required as a cofactor.

It is found in the mitochondrion matrix. It catalyses the reaction Release of N-terminal transit peptides from precursor proteins imported into the mitochondrion, typically with Arg in position P2.. With respect to regulation, binding to mppA is required for catalytic activity. Catalytic subunit of the essential mitochondrial processing protease (MPP), which cleaves the mitochondrial sequence off newly imported precursors proteins. Preferentially, cleaves after an arginine at position P2. The sequence is that of Mitochondrial-processing peptidase subunit beta (mppB) from Lentinula edodes (Shiitake mushroom).